We begin with the raw amino-acid sequence, 250 residues long: HLA class II histocompatibility antigen, DO alpha chain (250 aa).

A signal peptide spans M1–A25. The alpha-1 stretch occupies residues T26–N110. Residues T26–E217 lie on the Extracellular side of the membrane. Residues N104 and N144 are each glycosylated (N-linked (GlcNAc...) asparagine). The segment at V111–W204 is alpha-2. In terms of domain architecture, Ig-like C1-type spans P113–E205. A disulfide bond links C133 and C189. A connecting peptide region spans residues E205 to E217. The chain crosses the membrane as a helical span at residues T218 to I240. Residues M241–R250 are Cytoplasmic-facing.

It belongs to the MHC class II family. As to quaternary structure, heterodimer of an alpha chain (DOA) and a beta chain (DOB). Forms a heterotetrameric complex with an HLA-DM molecule during intracellular transport in endosomal/lysosomal compartments in B-cells.

The protein localises to the endosome membrane. It is found in the lysosome membrane. In terms of biological role, important modulator in the HLA class II restricted antigen presentation pathway by interaction with the HLA-DM molecule in B-cells. Modifies peptide exchange activity of HLA-DM. The sequence is that of HLA class II histocompatibility antigen, DO alpha chain (HLA-DOA) from Homo sapiens (Human).